Here is a 351-residue protein sequence, read N- to C-terminus: Histidinol-phosphate aminotransferase 2 (351 aa).

Residue Lys210 is modified to N6-(pyridoxal phosphate)lysine.

This sequence belongs to the class-II pyridoxal-phosphate-dependent aminotransferase family. Histidinol-phosphate aminotransferase subfamily. In terms of assembly, homodimer. Requires pyridoxal 5'-phosphate as cofactor.

The catalysed reaction is L-histidinol phosphate + 2-oxoglutarate = 3-(imidazol-4-yl)-2-oxopropyl phosphate + L-glutamate. It functions in the pathway amino-acid biosynthesis; L-histidine biosynthesis; L-histidine from 5-phospho-alpha-D-ribose 1-diphosphate: step 7/9. The protein is Histidinol-phosphate aminotransferase 2 (hisC2) of Rhizobium meliloti (strain 1021) (Ensifer meliloti).